The primary structure comprises 72 residues: Penaeidin-2d (72 aa).

Positions 1–21 are cleaved as a signal peptide; that stretch reads MRLVVCLVFLASFALVCQGGA. At Gln22 the chain carries Pyrrolidone carboxylic acid. 3 disulfide bridges follow: Cys45–Cys59, Cys48–Cys66, and Cys60–Cys67. Residue Lys71 is modified to Lysine amide.

It belongs to the penaeidin family.

The protein localises to the cytoplasmic granule. Antibacterial and antifungal activity. Presents chitin-binding activity. The sequence is that of Penaeidin-2d from Penaeus setiferus (Atlantic white shrimp).